A 122-amino-acid polypeptide reads, in one-letter code: Large ribosomal subunit protein uL14 (122 aa).

Belongs to the universal ribosomal protein uL14 family. As to quaternary structure, part of the 50S ribosomal subunit. Forms a cluster with proteins L3 and L19. In the 70S ribosome, L14 and L19 interact and together make contacts with the 16S rRNA in bridges B5 and B8.

Functionally, binds to 23S rRNA. Forms part of two intersubunit bridges in the 70S ribosome. This is Large ribosomal subunit protein uL14 from Oleidesulfovibrio alaskensis (strain ATCC BAA-1058 / DSM 17464 / G20) (Desulfovibrio alaskensis).